A 430-amino-acid chain; its full sequence is MFMERQDRYYQTYLNILKEELVAAMGCTEPIAIAYGAAKAREVLGAVPHKVVLEVSSNIIKNVKSVVVPNTDGLKGIEAATAAGIIAGRSDKILEVIAEVCQAEKQQIKTYLSETDIEVKLADSQIIFDIMITMFHQDSYVKLRIADYHTHIVHIEKNGEIIFGTGDLDAGISSLTDRKLLSVSKIIEFADSVRIEDVKELLDKQIEYNSAIARAGMEGNYGANVGRVLLKTYGNDVKIRAKAMAAAGSDARMSGCELPVIINSGSGNQGMTASLPVIEYAAELQSGEEKLYRALVVSNLITLHLKTGIGRLSAFCGVICAGCGSGAGIAYLHGGGYDEIAHTIVNAAAIVSGIVCDGAKPSCAGKIAAAVDAGILGYLMYKEGQQFRGGDGIVAKGIENTIANIGYLGKVGMKETDKEIINIMLNQCSS.

This sequence belongs to the UPF0597 family.

This is UPF0597 protein DSY1109 from Desulfitobacterium hafniense (strain Y51).